Reading from the N-terminus, the 506-residue chain is MADTESKKEKKRKSKKISDEEVGDIQESGDFLIKPESKVASLDTSQWPLLLKNFDKLNIRTAHYTPLPHGSNPLKRGIHDYVRSGFINLDKPANPSSHEVVAWIKRILRVEKTGHSGTLDPKVTGCLIVCVERATRLVKSQQSAGKEYVGIVRLHNALENEHQLARALECLTGALFQRPPLIAAVKRQLRVRTIYESKLIEYDPERRLGIFWVSCEAGTYIRTLCVHLGLLLGVGGQMQELRRVRSGVLGEKDNLVTMHDVLDAQWQFDHNKDETYLRRVIFPLEKLLISHKRIVMKDSAVNAICYGAKIMLPGVLRYEDGIEVNQDIVVITTKGEAICTAVALMTTAVISTCDHGVVAKIKRVIMERDTYPRKWGLGPKASQKKMMIQKGLLDKHGKPNNSTPSDWKEGYVDYSTTKVKKGGEASAKRKRDESGSEGEAAAAAQDTSKTEEESKKEKKKKKKEKKQKLAEEAAAEAPAEEETEVTESAKKKKKKKKAKETEADSD.

A disordered region spans residues 1–26 (MADTESKKEKKRKSKKISDEEVGDIQ). Asp120 serves as the catalytic Nucleophile. Residues 291 to 366 (HKRIVMKDSA…VVAKIKRVIM (76 aa)) form the PUA domain. 2 disordered regions span residues 391 to 410 (GLLDKHGKPNNSTPSDWKEG) and 419 to 506 (VKKG…ADSD). A compositionally biased stretch (basic and acidic residues) spans 421 to 434 (KGGEASAKRKRDES). Residues 457–466 (EKKKKKKEKK) are compositionally biased toward basic residues.

Belongs to the pseudouridine synthase TruB family. In terms of assembly, part of the H/ACA small nucleolar ribonucleoprotein (H/ACA snoRNP) complex. The complex binds a box H/ACA small nucleolar RNA (snoRNA), which may target the specific site of modification within the RNA substrate.

It localises to the nucleus. It is found in the nucleolus. Its subcellular location is the cajal body. It catalyses the reaction uridine in 5S rRNA = pseudouridine in 5S rRNA. Functionally, catalytic subunit of H/ACA small nucleolar ribonucleoprotein (H/ACA snoRNP) complex, which catalyzes pseudouridylation of rRNA. This involves the isomerization of uridine such that the ribose is subsequently attached to C5, instead of the normal N1. Pseudouridine ('psi') residues may serve to stabilize the conformation of rRNAs. Required for ribosome biogenesis and telomere maintenance. The sequence is that of H/ACA ribonucleoprotein complex subunit DKC1 from Danio rerio (Zebrafish).